Consider the following 292-residue polypeptide: MASSEVFTSEEAAQRAIKTYYESQESRMGYELVFGGTQHFGYYTPGTWSPFPIDKSLRRMEEKLMGWLALPAGSRILEAGCGVGHVALYLAKHGMRVTGVDIIDHHVEQARRSAQKANLPKDQIVIEKMDFERLEAIPSASHDGAFTMQSLGHAFSAEKALAGFFRVLKPGGRFALVEVERRPNAEADKKNPRLTEQLSMINVGTGMPTNERSHDGFYKGLLEEAGFVDIESRDISDNILPVVRMFYVVLLVPYLFVRLLGIEKHFVSMLAGTAGYVGYDRWRFMVVTGRKP.

A helical transmembrane segment spans residues 240–262 (LPVVRMFYVVLLVPYLFVRLLGI).

The protein belongs to the class I-like SAM-binding methyltransferase superfamily. Erg6/SMT family. S-adenosyl-L-methionine serves as cofactor.

The protein resides in the membrane. The enzyme catalyses 3-[(2E,4E,8S,10E,12Z)-4,8-dimethyltetradeca-2,4,10,12-tetraenoyl]-4-hydroxy-5-(4-hydroxyphenyl)-1,2-dihydropyridin-2-one = 8-epi-ilicicolin H. The protein operates within mycotoxin biosynthesis. Functionally, S-adenosyl-l-methionine-dependent Diels-Alderase; part of the gene cluster that mediates the biosynthesis of ilicicolin H, a 4-hydroxy-2-pyridonealkaloid that has potent and broad antifungal activities by inhibiting the mitochondrial respiration chain. IccD catalyzes the Diels-Alder reaction that converts the acyclic 2-pyridone intermediate to 8-epi-ilicicolin H. The biosynthesis of ilicicolin H starts with formation of the tetramic acid by the hybrid PKS-NRPS synthetase iccA with the partnering trans-enoyl reductase iccB since iccA lacks a designated enoylreductase (ER) domain. The cytochrome P450 monooxygenase iccC then catalyzes the ring expansion of the tetramate to the acyclic 2-pyridone. The pericyclase iccD further converts the acyclic 2-pyridone into 8-epi-ilicicolin H. Finally, the epimerase iccE converts 8-epi-ilicicolin H into ilicicolin H via epimerization. IccA to iccE are sufficient for ilicicolin H biosynthesis and the roles of the remaining enzymes, iccF, iccG and iccH within the pathway have still to be determined. This is S-adenosyl-L-methionine-dependent Diels-Alderase iccD from Talaromyces variabilis (Penicillium variabile).